We begin with the raw amino-acid sequence, 456 residues long: Histidine--tRNA ligase (456 aa).

Residues M1 to R20 are disordered.

This sequence belongs to the class-II aminoacyl-tRNA synthetase family. As to quaternary structure, homodimer.

It is found in the cytoplasm. The enzyme catalyses tRNA(His) + L-histidine + ATP = L-histidyl-tRNA(His) + AMP + diphosphate + H(+). The polypeptide is Histidine--tRNA ligase (Cupriavidus necator (strain ATCC 17699 / DSM 428 / KCTC 22496 / NCIMB 10442 / H16 / Stanier 337) (Ralstonia eutropha)).